The primary structure comprises 408 residues: Bifunctional polynucleotide phosphatase/kinase (408 aa).

Positions 1–38 are disordered; sequence MSSKKRKSPPQESLTSYFEKSSKSSKKYGSQNKDSDSS. Ser8 bears the Phosphoserine mark. Composition is skewed to polar residues over residues 10–19 and 28–38; these read PQESLTSYFE and YGSQNKDSDSS. 263 to 270 serves as a coordination point for ATP; the sequence is GFPSSGKS.

It in the N-terminal section; belongs to the DNA 3' phosphatase family.

It is found in the nucleus. It carries out the reaction a 3'end (2'-deoxyribonucleotide 3'-phosphate)-DNA + H2O = a 3'-end 2'-deoxyribonucleotide-DNA + phosphate. The enzyme catalyses a 5'-end dephospho-2'-deoxyribonucleoside-DNA + ATP = a 5'-end 5'-phospho-2'-deoxyribonucleoside-DNA + ADP + H(+). Functionally, catalyzes the phosphorylation of DNA at 5'-hydroxyl termini and can dephosphorylate its 3'-phosphate termini. Has a role in the repair of breaks in single-stranded DNA. The protein is Bifunctional polynucleotide phosphatase/kinase (pnk1) of Schizosaccharomyces pombe (strain 972 / ATCC 24843) (Fission yeast).